Reading from the N-terminus, the 81-residue chain is Cytotoxin I-like P-15 (81 aa).

Residues 1–21 (MKTLLLTLAAATIVCLDLGYT) form the signal peptide. 4 disulfide bridges follow: C24–C42, C35–C59, C63–C74, and C75–C80.

The protein belongs to the three-finger toxin family. Short-chain subfamily. Type IA cytotoxin sub-subfamily. As to quaternary structure, monomer in solution; Homodimer and oligomer in the presence of negatively charged lipids forming a pore with a size ranging between 20 and 30 Angstroms. Expressed by the venom gland.

It localises to the secreted. The protein resides in the target cell membrane. Functionally, shows cytolytic activity on many different cells by forming pore in lipid membranes. In vivo, increases heart rate or kills the animal by cardiac arrest. In addition, it binds to heparin with high affinity, interacts with Kv channel-interacting protein 1 (KCNIP1) in a calcium-independent manner, and binds to integrin alpha-V/beta-3 (ITGAV/ITGB3) with moderate affinity. The protein is Cytotoxin I-like P-15 of Naja atra (Chinese cobra).